Reading from the N-terminus, the 117-residue chain is MKLVRFLMKLTNETVSIELKNGTIVHGTITSVDMQMNTHLKAVKMTVKGREPVPVETLSIRGNNIRYYILPDSLPLDTLLIDDSTKPKQKKKEVVRGRGRGRGRGTRGRGRGASRGF.

The region spanning 2–74 is the Sm domain; that stretch reads KLVRFLMKLT…IRYYILPDSL (73 aa). Positions 81 to 117 are disordered; the sequence is IDDSTKPKQKKKEVVRGRGRGRGRGTRGRGRGASRGF. Over residues 87–117 the composition is skewed to basic residues; sequence PKQKKKEVVRGRGRGRGRGTRGRGRGASRGF.

This sequence belongs to the snRNP core protein family. In terms of assembly, belongs to the 40S cdc5-associated complex (or cwf complex), a spliceosome sub-complex reminiscent of a late-stage spliceosome composed of the U2, U5 and U6 snRNAs and at least brr2, cdc5, cwf2/prp3, cwf3/syf1, cwf4/syf3, cwf5/ecm2, spp42/cwf6, cwf7/spf27, cwf8, cwf9, cwf10, cwf11, cwf12, prp45/cwf13, cwf14, cwf15, cwf16, cwf17, cwf18, cwf19, cwf20, cwf21, cwf22, cwf23, cwf24, cwf25, cwf26, cyp7/cwf27, cwf28, cwf29/ist3, lea1, msl1, prp5/cwf1, prp10, prp12/sap130, prp17, prp22, sap61, sap62, sap114, sap145, slu7, smb1, smd1, smd3, smf1, smg1 and syf2. Interacts with saf5; the interaction is direct.

The protein resides in the nucleus. It is found in the cytoplasm. Its function is as follows. Plays a role in pre-mRNA splicing as a core component of the spliceosomal U1, U2, U4 and U5 small nuclear ribonucleoproteins (snRNPs), the building blocks of the spliceosome. The polypeptide is Small nuclear ribonucleoprotein Sm D1 (smd1) (Schizosaccharomyces pombe (strain 972 / ATCC 24843) (Fission yeast)).